The sequence spans 309 residues: Calcium homeostasis modulator protein 5 (309 aa).

Over 1-15 the chain is Cytoplasmic; the sequence is MDAFQSILKFFLNQK. Residues 16 to 37 traverse the membrane as a helical segment; it reads TAIGYSFMALLTVGSERLFSLV. Arg-32 and Val-37 together coordinate a 1,2-diacyl-sn-glycero-3-phosphate. Over 38 to 45 the chain is Extracellular; sequence AFKCPCSV. Cystine bridges form between Cys-41–Cys-127, Cys-43–Cys-158, and Cys-142–Cys-149. The chain crosses the membrane as a helical span at residues 46–70; that stretch reads ENTAYGLVFLFAPAWVLLILGFFLN. Topologically, residues 71–99 are cytoplasmic; the sequence is NKAWRLFTGCCMNPKKIFPRRRCCRFFYV. A helical membrane pass occupies residues 100-129; it reads LGHIILSSLVAPVMWLSVALLNGTFYECAM. Residue Asn-121 coordinates a 1,2-diacyl-sn-glycero-3-phosphate. The Extracellular segment spans residues 130 to 174; that stretch reads SGTRSTRLLEMICKGKPKECWEELHKVSCGKSSMAAMESEEVRLS. The helical transmembrane segment at 175–200 threads the bilayer; it reads LQAQSQILGWCLICSASFLSLLTTCY. Over 201-309 the chain is Cytoplasmic; the sequence is ARCRSKVSYL…MILVGTAQSL (109 aa). Arg-202 serves as a coordination point for a 1,2-diacyl-sn-glycero-3-phosphate.

It belongs to the CALHM family. Oligomerizes to form undecameric cone-shaped channels.

The protein resides in the membrane. Functionally, may assemble to form large pore channels with gating and ion conductance likely regulated by membrane lipids. The protein is Calcium homeostasis modulator protein 5 of Mus musculus (Mouse).